The following is a 277-amino-acid chain: Large ribosomal subunit protein uL2 (277 aa).

The disordered stretch occupies residues 223 to 277 (VTMNPVDHPHGGGEGRTSGGRHPVTPWGKPTKGMKTRSNKATDKFIVTSRHKRKK).

It belongs to the universal ribosomal protein uL2 family. In terms of assembly, part of the 50S ribosomal subunit. Forms a bridge to the 30S subunit in the 70S ribosome.

In terms of biological role, one of the primary rRNA binding proteins. Required for association of the 30S and 50S subunits to form the 70S ribosome, for tRNA binding and peptide bond formation. It has been suggested to have peptidyltransferase activity; this is somewhat controversial. Makes several contacts with the 16S rRNA in the 70S ribosome. In Azorhizobium caulinodans (strain ATCC 43989 / DSM 5975 / JCM 20966 / LMG 6465 / NBRC 14845 / NCIMB 13405 / ORS 571), this protein is Large ribosomal subunit protein uL2.